The primary structure comprises 169 residues: S-ribosylhomocysteine lyase (169 aa).

Residues His-54, His-58, and Cys-128 each contribute to the Fe cation site.

This sequence belongs to the LuxS family. As to quaternary structure, homodimer. The cofactor is Fe cation.

It carries out the reaction S-(5-deoxy-D-ribos-5-yl)-L-homocysteine = (S)-4,5-dihydroxypentane-2,3-dione + L-homocysteine. Functionally, involved in the synthesis of autoinducer 2 (AI-2) which is secreted by bacteria and is used to communicate both the cell density and the metabolic potential of the environment. The regulation of gene expression in response to changes in cell density is called quorum sensing. Catalyzes the transformation of S-ribosylhomocysteine (RHC) to homocysteine (HC) and 4,5-dihydroxy-2,3-pentadione (DPD). In Shewanella loihica (strain ATCC BAA-1088 / PV-4), this protein is S-ribosylhomocysteine lyase.